Consider the following 137-residue polypeptide: Large ribosomal subunit protein uL16 (137 aa).

Belongs to the universal ribosomal protein uL16 family. In terms of assembly, part of the 50S ribosomal subunit.

Its function is as follows. Binds 23S rRNA and is also seen to make contacts with the A and possibly P site tRNAs. The chain is Large ribosomal subunit protein uL16 from Psychrobacter arcticus (strain DSM 17307 / VKM B-2377 / 273-4).